The primary structure comprises 402 residues: Pentalenic acid synthase (402 aa).

Positions 1–28 (MTEPGTSVSAPVAFPQDRTCPYDPPTAY) are disordered. Cysteine 351 provides a ligand contact to heme.

The protein belongs to the cytochrome P450 family. It depends on heme as a cofactor.

The catalysed reaction is 1-deoxypentalenate + reduced 2[4Fe-4S]-[ferredoxin] + O2 + 2 H(+) = pentalenate + oxidized 2[4Fe-4S]-[ferredoxin] + H2O. The protein operates within antibiotic biosynthesis; neopentalenolactone biosynthesis. Catalyzes the conversion of 1-deoxypentalenic acid to pentalenic acid in the biosynthesis of neopentalenolactone antibiotic. The chain is Pentalenic acid synthase (cyp28) from Streptomyces avermitilis (strain ATCC 31267 / DSM 46492 / JCM 5070 / NBRC 14893 / NCIMB 12804 / NRRL 8165 / MA-4680).